The sequence spans 516 residues: MAYVLTETAAGYALLKAADKKIHKSSSLVEDLNTAEKVAEQFKIHRFEKFQSAANALEEANAIIEGKVSENLQKLLEDAKSDKKATLIVSEAKLGNAINKLGLNFQVVSDAASLDLQRAIKQFLPELLPGLDDSALKQMSLGLAHSMGRHKLKFSADKVDTMIIQAIALLDDLDKELNTYAMRCKEWYGWHFPELAKMITDSAAYARIILTMGVRSNASETDLSEILPEEVEEQVKAAAEVSMGTEITEDDLNNIKALAEQIVDFAAYREQLSNYLSSRMKAIAPNLTAMVGELVGARLIAHAGSLTSLAKAPASTVQILGAEKALFRALKTKHDTPKYGIIYHASLVGQASGKNKGRIARTLAAKAAVSLRYDCFDEERDESDDFGLENRAKVEGRLSQLEGRDMRTTSKVVREQPKVEITEARAYNADADSTAAAAAAAPTADSDDEESETEEVEEKKSKKDKKKDKKEKKDKKKDKKRKRDDDKEDKESSKKSKKDKKEKKEKKEKKAKKEKK.

The Nop domain occupies 283-403; sequence IAPNLTAMVG…VEGRLSQLEG (121 aa). The interval 423 to 516 is disordered; the sequence is EARAYNADAD…KEKKAKKEKK (94 aa). Residues 429-444 show a composition bias toward low complexity; it reads ADADSTAAAAAAAPTA. A compositionally biased stretch (acidic residues) spans 445–456; sequence DSDDEESETEEV. The segment covering 462–482 has biased composition (basic residues); that stretch reads KKDKKKDKKEKKDKKKDKKRK. A compositionally biased stretch (basic and acidic residues) spans 483 to 494; it reads RDDDKEDKESSK. Residues 495–516 are compositionally biased toward basic residues; the sequence is KSKKDKKEKKEKKEKKAKKEKK.

Belongs to the NOP5/NOP56 family.

The protein localises to the nucleus. It is found in the nucleolus. Functionally, required for pre-18S rRNA processing. May bind microtubules. The protein is Nucleolar protein 58 (NOP58) of Candida albicans (strain SC5314 / ATCC MYA-2876) (Yeast).